The sequence spans 199 residues: Chaperone protein TorD (199 aa).

The protein belongs to the TorD/DmsD family. TorD subfamily.

Its subcellular location is the cytoplasm. Its function is as follows. Involved in the biogenesis of TorA. Acts on TorA before the insertion of the molybdenum cofactor and, as a result, probably favors a conformation of the apoenzyme that is competent for acquiring the cofactor. This chain is Chaperone protein TorD, found in Escherichia coli O139:H28 (strain E24377A / ETEC).